Consider the following 209-residue polypeptide: Superoxide dismutase [Mn/Fe] (209 aa).

H38, H90, D172, and H176 together coordinate Fe(3+). Mn(2+) is bound by residues H38, H90, D172, and H176.

It belongs to the iron/manganese superoxide dismutase family. Mn(2+) serves as cofactor. The cofactor is Fe(3+).

The catalysed reaction is 2 superoxide + 2 H(+) = H2O2 + O2. Its function is as follows. Destroys superoxide anion radicals which are normally produced within the cells and which are toxic to biological systems. Catalyzes the dismutation of superoxide anion radicals into O2 and H2O2 by successive reduction and oxidation of the transition metal ion at the active site. The protein is Superoxide dismutase [Mn/Fe] (sodB) of Rickettsia prowazekii (strain Madrid E).